A 436-amino-acid polypeptide reads, in one-letter code: Phosphoribosylamine--glycine ligase (436 aa).

Residues 106–318 (RKLFEDYDIE…LADVCQAIVD (213 aa)) form the ATP-grasp domain. Position 133-196 (133-196 (LDDFDRDVVV…EERLIGEEFT (64 aa))) interacts with ATP. 3 residues coordinate Mg(2+): Gln276, Glu288, and Asn290. Residues Gln276, Glu288, and Asn290 each contribute to the Mn(2+) site.

It belongs to the GARS family. The cofactor is Mg(2+). Mn(2+) serves as cofactor.

The catalysed reaction is 5-phospho-beta-D-ribosylamine + glycine + ATP = N(1)-(5-phospho-beta-D-ribosyl)glycinamide + ADP + phosphate + H(+). It functions in the pathway purine metabolism; IMP biosynthesis via de novo pathway; N(1)-(5-phospho-D-ribosyl)glycinamide from 5-phospho-alpha-D-ribose 1-diphosphate: step 2/2. This Methanobrevibacter smithii (strain ATCC 35061 / DSM 861 / OCM 144 / PS) protein is Phosphoribosylamine--glycine ligase.